The primary structure comprises 2364 residues: Spectrin beta chain, non-erythrocytic 1 (2364 aa).

Thr2 is subject to N-acetylthreonine. Positions 2–275 are actin-binding; it reads TTTVATDYDN…IITYVVTYYH (274 aa). A phosphoserine mark is found at Ile14 and Ser36. Calponin-homology (CH) domains lie at 54-158 and 173-278; these read AVQK…LRFQ and KSAK…HYFS. Residue Lys90 is modified to N6-acetyllysine. The residue at position 228 (Ser228) is a Phosphoserine. 15 Spectrin repeats span residues 303 to 411, 423 to 525, 530 to 636, 639 to 742, 745 to 847, 850 to 952, 957 to 1060, 1063 to 1166, 1170 to 1258, 1276 to 1376, 1381 to 1482, 1486 to 1590, 1592 to 1696, 1698 to 1801, and 1805 to 1907; these read MIEK…LALR, LARR…QRLE, LQKI…RLEE, RLWK…RLEE, LLHQ…ALQD, ALYK…DALL, IQNY…SLGE, KLQQ…NLLS, AYQQ…DRHR, DLQK…AQRL, KAEL…HNLL, EIHQ…RLEE, HRAQ…KLDE, HRLF…TQIL, and YELH…RVRL. Ser817, Ser825, Ser903, Ser1057, Ser1076, Ser1079, and Ser1237 each carry phosphoserine. A phosphoserine mark is found at Ser1388, Ser1447, and Ser1557. Positions 1563 to 2093 are interaction with ANK2; the sequence is IRQRLADLKQ…LLEVRRQQEE (531 aa). A Phosphotyrosine modification is found at Tyr1805. An N6-acetyllysine mark is found at Lys1815, Lys1913, and Lys1989. Spectrin repeat units follow at residues 1914–2014 and 2018–2097; these read FRFF…EWLR and EVHQ…EERK. Residues 2089-2196 form a disordered region; that stretch reads RQQEEEERKR…TLPARTQETP (108 aa). Phosphoserine is present on residues Ser2102, Ser2128, and Ser2138. Over residues 2115–2131 the composition is skewed to polar residues; it reads SQQQWDTSKGEQVSQNG. A compositionally biased stretch (polar residues) spans 2145 to 2166; it reads VDTSEMVNGATEQRTSSKESSP. A Phosphothreonine modification is found at Thr2147. At Ser2148 the chain carries Phosphoserine. The segment at 2149–2177 is mediates interaction with CAMSAP1; the sequence is EMVNGATEQRTSSKESSPIPSPTSDRKAK. A Phosphothreonine modification is found at Thr2159. A phosphoserine mark is found at Ser2160, Ser2161, Ser2164, Ser2165, and Ser2169. The residue at position 2171 (Thr2171) is a Phosphothreonine. Ser2172 and Ser2184 each carry phosphoserine. Residues 2184–2196 show a composition bias toward polar residues; the sequence is SAATLPARTQETP. 2 positions are modified to phosphothreonine: Thr2187 and Thr2195. The 111-residue stretch at 2197-2307 folds into the PH domain; that stretch reads SAQMEGFLNR…WIQAISSAIS (111 aa). Positions 2309–2364 are disordered; the sequence is DKHEVSASTQSTPASSRAQTLPTSVVTITSESSPGKREKDKEKDKEKRFSLFGKKK. 2 positions are modified to phosphoserine: Ser2314 and Ser2319. Over residues 2314-2341 the composition is skewed to polar residues; sequence SASTQSTPASSRAQTLPTSVVTITSESS. Phosphothreonine is present on Thr2320. Ser2324 carries an O-linked (GlcNAc) serine glycan. Position 2328 is a phosphothreonine (Thr2328). Ser2340 and Ser2341 each carry phosphoserine. Residues 2342–2357 show a composition bias toward basic and acidic residues; that stretch reads PGKREKDKEKDKEKRF.

This sequence belongs to the spectrin family. Interacts with CAMSAP1. Interacts with ANK2. Interacts with CPNE4 (via VWFA domain). Like erythrocyte spectrin, the spectrin-like proteins are capable to form dimers which can further associate to tetramers. Can form heterodimers with SPTAN1. Isoform Short cannot bind to the axonal protein fodaxin. In terms of tissue distribution, isoform 2 is present in brain, lung and kidney (at protein level).

It localises to the cytoplasm. The protein localises to the cytoskeleton. It is found in the myofibril. The protein resides in the sarcomere. Its subcellular location is the m line. It localises to the cytosol. The protein localises to the cell membrane. Its function is as follows. Fodrin, which seems to be involved in secretion, interacts with calmodulin in a calcium-dependent manner and is thus candidate for the calcium-dependent movement of the cytoskeleton at the membrane. Plays a critical role in central nervous system development and function. The protein is Spectrin beta chain, non-erythrocytic 1 (SPTBN1) of Homo sapiens (Human).